The chain runs to 317 residues: Aquaporin-2 (317 aa).

Over 1-75 (MSLRDDLTIN…RSQEFKMQHR (75 aa)) the chain is Cytoplasmic. The chain crosses the membrane as a helical span at residues 76 to 96 (EFLAEFIGTLILVLLTCGFCA). Over 97–108 (EQTLNIEKSKSW) the chain is Extracellular. A helical transmembrane segment spans residues 109-129 (LTSSLGSGLSVLIGICVAGHV). Topologically, residues 130 to 154 (SGGHLNPAITIAFWVFSGFPIRKVP) are cytoplasmic. The NPA 1 signature appears at 135–137 (NPA). Residues 155 to 175 (MYITAQLLGAFSGAALLYSIV) traverse the membrane as a helical segment. Topologically, residues 176-208 (EPAISQFDHGKRQILGELGTAGIFGTYPPLYVG) are extracellular. A helical transmembrane segment spans residues 209-229 (TGSAVASEVVGTAMLLLVVMV). Topologically, residues 230–242 (TGHPNNLPFRTAQ) are cytoplasmic. A helical transmembrane segment spans residues 243-263 (GAMIALGVTTISLCIGYTSGF). The Extracellular segment spans residues 264-295 (SLNPARDFGPRLFTAVAGWGIDVFTVHHYYAL). Residues 266–268 (NPA) carry the NPA 2 motif. A helical transmembrane segment spans residues 296–316 (VPMFAPILGGLAGGFIYTVFI). A topological domain (cytoplasmic) is located at residue Asp-317.

This sequence belongs to the MIP/aquaporin (TC 1.A.8) family.

It is found in the cell membrane. The catalysed reaction is H2O(in) = H2O(out). It catalyses the reaction glycerol(in) = glycerol(out). Water channel required to facilitate the transport of water across membranes. Contributes to water uptake of spores during the early stages of spore germination. Aquaporins AQP1 and AQP2 act as extracellular pH sensors and enable the spores to hydrate under favorable conditions and to commence germination. Wounded vegetables and fruit present acidic pH, so the optimal pH range for germination is adapted to the relevant host pH. This is Aquaporin-2 from Rhizopus delemar (strain RA 99-880 / ATCC MYA-4621 / FGSC 9543 / NRRL 43880) (Mucormycosis agent).